Consider the following 231-residue polypeptide: Lipoprotein-releasing system ATP-binding protein LolD (231 aa).

The ABC transporter domain occupies 6 to 230 (LSCKNVSKKY…DGELELVINS (225 aa)). 42–49 (GLSGSGKT) is a binding site for ATP.

This sequence belongs to the ABC transporter superfamily. Lipoprotein translocase (TC 3.A.1.125) family. The complex is composed of two ATP-binding proteins (LolD) and two transmembrane proteins (LolC and LolE).

It is found in the cell inner membrane. Functionally, part of the ABC transporter complex LolCDE involved in the translocation of mature outer membrane-directed lipoproteins, from the inner membrane to the periplasmic chaperone, LolA. Responsible for the formation of the LolA-lipoprotein complex in an ATP-dependent manner. The polypeptide is Lipoprotein-releasing system ATP-binding protein LolD (Francisella tularensis subsp. holarctica (strain OSU18)).